An 842-amino-acid polypeptide reads, in one-letter code: Oligopeptide transporter phomP2' (842 aa).

Positions 1-58 are disordered; that stretch reads MEADPKVPFTDEMNIQDEHNWESGSWSSSRRSNDSNVTLLSRRSSVEQHEDERQKDSD. A compositionally biased stretch (low complexity) spans 23-36; that stretch reads SGSWSSSRRSNDSN. N-linked (GlcNAc...) asparagine glycosylation is found at Asn-33 and Asn-36. Residues 44-58 are compositionally biased toward basic and acidic residues; that stretch reads SSVEQHEDERQKDSD. The next 6 helical transmembrane spans lie at 105-125, 177-197, 210-230, 268-288, 315-335, and 345-365; these read VWLL…VYYF, ALVV…GPLS, PWAI…VGLY, VFMA…FVFP, GFGL…SPLF, and FVGA…SDAL. N-linked (GlcNAc...) asparagine glycans are attached at residues Asn-386 and Asn-398. 4 helical membrane passes run 415 to 435, 478 to 498, 505 to 525, and 585 to 605; these read AMHF…AVLF, AWYA…LYAG, WGLQ…GMLF, and WELL…NWAV. A compositionally biased stretch (gly residues) spans 629–649; sequence QGLGLGQGGGGGGGGGGGGGQ. The interval 629–657 is disordered; sequence QGLGLGQGGGGGGGGGGGGGQQQRAAGAH. A run of 3 helical transmembrane segments spans residues 668 to 688, 700 to 720, and 731 to 751; these read NFFS…FGGG, WLLP…WLIH, and WPLH…FPTT. N-linked (GlcNAc...) asparagine glycosylation is present at Asn-752. A helical transmembrane segment spans residues 784–804; that stretch reads AGLDCGAQLVQMVLGLAFLVF.

Belongs to the oligopeptide OPT transporter family.

The protein localises to the membrane. Oligopeptide transporter; part of the gene cluster that mediates the biosynthesis of the phomopsins, a group of hexapeptide mycotoxins which infects lupins and causes lupinosis disease in livestock. The sequence is that of Oligopeptide transporter phomP2' from Diaporthe leptostromiformis (Lupinosis disease fungus).